The following is a 411-amino-acid chain: Protein translocase subunit SecY (411 aa).

10 helical membrane passes run 11-31 (IIFT…PVPG), 52-72 (IFSG…VPYI), 111-131 (ALGW…PYVF), 135-155 (FAFV…IMWL), 163-180 (GIGN…VSGL), 197-217 (SLKF…TICV), 253-273 (VMPI…TQII), 291-311 (LYLL…TSIV), 349-369 (TFLG…IEKV), and 377-397 (GLGA…AKQI).

This sequence belongs to the SecY/SEC61-alpha family. In terms of assembly, component of the plastid Sec protein translocase complex, which is composed of at least SecY, SecE and SecG.

Its subcellular location is the plastid. The protein resides in the chloroplast thylakoid membrane. Functionally, the central subunit of the protein translocation channel SecYE. Consists of two halves formed by TMs 1-5 and 6-10. These two domains form a lateral gate at the front which open onto the bilayer between TMs 2 and 7, and are clamped together by SecE at the back. The channel is closed by both a pore ring composed of hydrophobic SecY resides and a short helix (helix 2A) on the extracellular side of the membrane which forms a plug. The sequence is that of Protein translocase subunit SecY from Pyropia yezoensis (Susabi-nori).